Reading from the N-terminus, the 417-residue chain is Tyrosine aminotransferase (417 aa).

Position 249 is an N6-(pyridoxal phosphate)lysine (Lys-249).

It belongs to the class-I pyridoxal-phosphate-dependent aminotransferase family. In terms of assembly, homodimer. It depends on pyridoxal 5'-phosphate as a cofactor.

It carries out the reaction L-tyrosine + 2-oxoglutarate = 3-(4-hydroxyphenyl)pyruvate + L-glutamate. It functions in the pathway amino-acid degradation; L-phenylalanine degradation; acetoacetate and fumarate from L-phenylalanine: step 2/6. In terms of biological role, transaminase involved in tyrosine breakdown. Converts tyrosine to p-hydroxyphenylpyruvate. Has much lower affinity and transaminase activity towards phenylalanine. This chain is Tyrosine aminotransferase (tat), found in Dictyostelium discoideum (Social amoeba).